The primary structure comprises 421 residues: Histidine--tRNA ligase (421 aa).

This sequence belongs to the class-II aminoacyl-tRNA synthetase family. As to quaternary structure, homodimer.

It localises to the cytoplasm. The enzyme catalyses tRNA(His) + L-histidine + ATP = L-histidyl-tRNA(His) + AMP + diphosphate + H(+). The polypeptide is Histidine--tRNA ligase (Alkaliphilus oremlandii (strain OhILAs) (Clostridium oremlandii (strain OhILAs))).